The sequence spans 129 residues: Small ribosomal subunit protein uS11 (129 aa).

The protein belongs to the universal ribosomal protein uS11 family. As to quaternary structure, part of the 30S ribosomal subunit. Interacts with proteins S7 and S18. Binds to IF-3.

Located on the platform of the 30S subunit, it bridges several disparate RNA helices of the 16S rRNA. Forms part of the Shine-Dalgarno cleft in the 70S ribosome. This is Small ribosomal subunit protein uS11 from Rhodopseudomonas palustris (strain HaA2).